The chain runs to 161 residues: MLVILAFIILFHITSAILLFIATINNAWRIKGDFSMDLWYNCNTTACYDIPKSATYDAAYLQAVQATMILATILCCVGFFVFILQLFRLKQGERFVFTAIIQLLSAFCVMTGASIYTAEGLTFNGQEFKNAEYGYSFVVAWVAFPMTLLSGLMYLVLRKRK.

Transmembrane regions (helical) follow at residues 1-21, 67-87, 95-115, and 137-157; these read MLVI…LLFI, TMIL…LQLF, FVFT…GASI, and FVVA…YLVL.

It belongs to the PMP-22/EMP/MP20 family. As to expression, expressed in the arches, orbits, pectoral fins, vessels, pronephric renal tubules, and glomeruli.

It is found in the golgi apparatus membrane. The protein localises to the cell membrane. Its subcellular location is the apical cell membrane. It localises to the membrane raft. The protein resides in the cytoplasm. It is found in the nucleus. The protein localises to the perinuclear region. In terms of biological role, functions as a key regulator of cell membrane composition by regulating protein surface expression. Also, plays a role in regulation of processes including cell migration, cell proliferation, cell contraction and cell adhesion. May play a role in glomerular filtration. In Danio rerio (Zebrafish), this protein is Epithelial membrane protein 2 (emp2).